A 441-amino-acid polypeptide reads, in one-letter code: 23S rRNA (uracil(1939)-C(5))-methyltransferase RlmD (441 aa).

The region spanning 10-68 is the TRAM domain; the sequence is KPLKQQSLVLDITAMDHHGRGIAKHNNKVCFVSNALPNEQVKATIIADKARYSEAQTHK. Residues cysteine 81, cysteine 87, cysteine 90, and cysteine 169 each coordinate [4Fe-4S] cluster. The S-adenosyl-L-methionine site is built by glutamine 274, phenylalanine 303, asparagine 308, glutamate 324, aspartate 351, and aspartate 372. Cysteine 398 (nucleophile) is an active-site residue.

It belongs to the class I-like SAM-binding methyltransferase superfamily. RNA M5U methyltransferase family. RlmD subfamily.

It catalyses the reaction uridine(1939) in 23S rRNA + S-adenosyl-L-methionine = 5-methyluridine(1939) in 23S rRNA + S-adenosyl-L-homocysteine + H(+). In terms of biological role, catalyzes the formation of 5-methyl-uridine at position 1939 (m5U1939) in 23S rRNA. The protein is 23S rRNA (uracil(1939)-C(5))-methyltransferase RlmD of Pseudoalteromonas translucida (strain TAC 125).